Consider the following 449-residue polypeptide: Trigger factor (449 aa).

In terms of domain architecture, PPIase FKBP-type spans 173-258 (GDRVTVDFVG…LKKVEWPHLP (86 aa)).

Belongs to the FKBP-type PPIase family. Tig subfamily.

The protein localises to the cytoplasm. The enzyme catalyses [protein]-peptidylproline (omega=180) = [protein]-peptidylproline (omega=0). Its function is as follows. Involved in protein export. Acts as a chaperone by maintaining the newly synthesized protein in an open conformation. Functions as a peptidyl-prolyl cis-trans isomerase. The chain is Trigger factor from Burkholderia mallei (strain NCTC 10229).